A 1431-amino-acid chain; its full sequence is Probable serine/threonine-protein kinase irlA (1431 aa).

A compositionally biased stretch (basic residues) spans 1–10 (MTKPIFKSKT). Disordered stretches follow at residues 1–81 (MTKP…EKEE) and 736–879 (KREK…NNNK). Residues 25–43 (NEDEEEEEGGEEGGEEEEI) are compositionally biased toward acidic residues. Residues 46 to 67 (NKNSNNSSSNSNNNNNDNNNNN) are compositionally biased toward low complexity. Coiled coils occupy residues 57 to 97 (NNNN…LDME) and 715 to 759 (KKRS…NNNN). Residues 68-81 (GEERKVEKEEEKEE) are compositionally biased toward basic and acidic residues. Residues 738 to 749 (EKKKQKDKKKNK) show a composition bias toward basic residues. The span at 750–776 (SNQNQKNNNNQNNQSNNNKINSPSSNK) shows a compositional bias: low complexity. Polar residues predominate over residues 777–791 (LTQNVTPPSSPVNII). Low complexity predominate over residues 792 to 812 (TSSSTTSSSTSSTTSSTTSST). The span at 821–838 (TLPIKTSSPTKPESQKPS) shows a compositional bias: polar residues. Residues 854–878 (NNNNNNNNNNNNNNNNNNNNNNNNN) show a composition bias toward low complexity. Residues 860-971 (NNNNNNNNNN…QESIQLNQTL (112 aa)) adopt a coiled-coil conformation. The Protein kinase domain maps to 987–1261 (RDENNIIGRG…IDTILNHPLF (275 aa)). ATP-binding positions include 993 to 1001 (IGRGSNGTL) and lysine 1016. Residue aspartate 1130 is the Proton acceptor of the active site. In terms of domain architecture, KEN spans 1264–1431 (TNEKIKFYES…NSKDYLNIKF (168 aa)).

Belongs to the protein kinase superfamily. Ser/Thr protein kinase family.

It carries out the reaction L-seryl-[protein] + ATP = O-phospho-L-seryl-[protein] + ADP + H(+). The enzyme catalyses L-threonyl-[protein] + ATP = O-phospho-L-threonyl-[protein] + ADP + H(+). The polypeptide is Probable serine/threonine-protein kinase irlA (irlA) (Dictyostelium discoideum (Social amoeba)).